A 1159-amino-acid polypeptide reads, in one-letter code: ATP-dependent helicase/deoxyribonuclease subunit B (1159 aa).

A UvrD-like helicase ATP-binding domain is found at 1-401 (MSIRFVYGRS…LLKNWSYESV (401 aa)). An ATP-binding site is contributed by 8 to 15 (GRSGTGKS). The 304-residue stretch at 279–582 (PYRFKGNLEL…NIGDIARIKG (304 aa)) folds into the UvrD-like helicase C-terminal domain. 4 residues coordinate [4Fe-4S] cluster: cysteine 787, cysteine 1106, cysteine 1109, and cysteine 1115.

The protein belongs to the helicase family. AddB/RexB type 1 subfamily. In terms of assembly, heterodimer of AddA and AddB. The cofactor is Mg(2+). [4Fe-4S] cluster is required as a cofactor.

In terms of biological role, the heterodimer acts as both an ATP-dependent DNA helicase and an ATP-dependent, dual-direction single-stranded exonuclease. Recognizes the chi site generating a DNA molecule suitable for the initiation of homologous recombination. The AddB subunit has 5' -&gt; 3' nuclease activity but not helicase activity. The polypeptide is ATP-dependent helicase/deoxyribonuclease subunit B (Clostridium beijerinckii (strain ATCC 51743 / NCIMB 8052) (Clostridium acetobutylicum)).